We begin with the raw amino-acid sequence, 553 residues long: Coiled-coil domain-containing protein 85A (553 aa).

Residues 1 to 28 are compositionally biased toward low complexity; sequence MSKAAGGAAAAAAAAESCSPAPAGSSAA. The interval 1–37 is disordered; the sequence is MSKAAGGAAAAAAAAESCSPAPAGSSAAPPAPVEDLS. Coiled-coil stretches lie at residues 43 to 109 and 137 to 169; these read ELLQ…RDLC and MHKEVALYLQKLKDLEVKQEEVVKENMELKELC. 3 disordered regions span residues 203-414, 433-461, and 491-518; these read YVRD…GMNE, ENRMLPQASQNRRQPPTRNSSNMEKGWGS, and SGADGSNSSPNSAASFSGHATPSQQPEP. Positions 209 to 220 are enriched in low complexity; it reads DGSSTSSTGSTD. Residues 236-260 are compositionally biased toward basic and acidic residues; it reads HLQKPRSEGSPEHSKHRSASPEHPQ. Positions 376–389 are enriched in gly residues; sequence GGSGGSGGSGGGSR. Positions 391–403 are enriched in basic and acidic residues; sequence GTLRRQAQEDGSP. Positions 412-443 form a coiled coil; that stretch reads MNESTLSYVRQLEARVRQLEEENRMLPQASQN. Polar residues predominate over residues 439–455; sequence QASQNRRQPPTRNSSNM. The segment covering 491-508 has biased composition (low complexity); the sequence is SGADGSNSSPNSAASFSG. R541 is subject to Asymmetric dimethylarginine.

It belongs to the CCDC85 family. In terms of assembly, may interact with ARVCF; CTNND1; CTNND2 and PKP4.

The protein resides in the cell junction. The protein localises to the adherens junction. Functionally, may play a role in cell-cell adhesion and epithelium development through its interaction with proteins of the beta-catenin family. The protein is Coiled-coil domain-containing protein 85A (CCDC85A) of Homo sapiens (Human).